The primary structure comprises 255 residues: GTP cyclohydrolase III 1 (255 aa).

It belongs to the archaeal-type GTP cyclohydrolase family.

It catalyses the reaction GTP + 3 H2O = 2-amino-5-formylamino-6-(5-phospho-D-ribosylamino)pyrimidin-4(3H)-one + 2 phosphate + 2 H(+). Its function is as follows. Catalyzes the formation of 2-amino-5-formylamino-6-ribofuranosylamino-4(3H)-pyrimidinone ribonucleotide monophosphate and inorganic phosphate from GTP. Also has an independent pyrophosphate phosphohydrolase activity. This chain is GTP cyclohydrolase III 1 (gch31), found in Halobacterium salinarum (strain ATCC 700922 / JCM 11081 / NRC-1) (Halobacterium halobium).